Reading from the N-terminus, the 310-residue chain is ADP-L-glycero-D-manno-heptose-6-epimerase (310 aa).

Residues 10-11 (FI), 31-32 (DN), K38, K53, 75-79 (EGACS), and N92 each bind NADP(+). The active-site Proton acceptor is Y140. K144 is a binding site for NADP(+). A substrate-binding site is contributed by N169. V170 and K178 together coordinate NADP(+). K178 serves as the catalytic Proton acceptor. Substrate-binding positions include S180, H187, 201–204 (FEGS), and R209. The residue at position 267 (K267) is an N6-acetyllysine. Substrate is bound at residue Y272.

The protein belongs to the NAD(P)-dependent epimerase/dehydratase family. HldD subfamily. Homopentamer. NADP(+) serves as cofactor.

It carries out the reaction ADP-D-glycero-beta-D-manno-heptose = ADP-L-glycero-beta-D-manno-heptose. It functions in the pathway nucleotide-sugar biosynthesis; ADP-L-glycero-beta-D-manno-heptose biosynthesis; ADP-L-glycero-beta-D-manno-heptose from D-glycero-beta-D-manno-heptose 7-phosphate: step 4/4. Functionally, catalyzes the interconversion between ADP-D-glycero-beta-D-manno-heptose and ADP-L-glycero-beta-D-manno-heptose via an epimerization at carbon 6 of the heptose. This chain is ADP-L-glycero-D-manno-heptose-6-epimerase, found in Escherichia coli (strain SMS-3-5 / SECEC).